An 845-amino-acid polypeptide reads, in one-letter code: Protein P (845 aa).

A terminal protein domain (TP) region spans residues 1-179 (MPLSYQHFRK…FCGSPYSWEQ (179 aa)). Positions 180 to 348 (ELQHGRLVIK…YCLSHLVNLR (169 aa)) are spacer. The segment at 226 to 252 (GLQPRQGRLASSQPSRSGSIRAKAHPS) is disordered. The segment covering 234 to 243 (LASSQPSRSG) has biased composition (polar residues). Positions 349 to 692 (EDWGPCDEHG…YMNLYPVARQ (344 aa)) are polymerase/reverse transcriptase domain (RT). One can recognise a Reverse transcriptase domain in the interval 359 to 602 (EHHIRIPRTP…YSLNFMGYII (244 aa)). Residues D431, D553, and D554 each coordinate Mg(2+). Residues 693-845 (RPGLCQVFAD…SPLHVAWRPP (153 aa)) are rnaseH domain (RH).

The protein belongs to the hepadnaviridae P protein family.

The enzyme catalyses DNA(n) + a 2'-deoxyribonucleoside 5'-triphosphate = DNA(n+1) + diphosphate. It carries out the reaction Endonucleolytic cleavage to 5'-phosphomonoester.. Its activity is regulated as follows. Activated by host HSP70 and HSP40 in vitro to be able to bind the epsilon loop of the pgRNA. Because deletion of the RNase H region renders the protein partly chaperone-independent, the chaperones may be needed indirectly to relieve occlusion of the RNA-binding site by this domain. Inhibited by several reverse-transcriptase inhibitors: Lamivudine, Adefovir and Entecavir. Functionally, multifunctional enzyme that converts the viral RNA genome into dsDNA in viral cytoplasmic capsids. This enzyme displays a DNA polymerase activity that can copy either DNA or RNA templates, and a ribonuclease H (RNase H) activity that cleaves the RNA strand of RNA-DNA heteroduplexes in a partially processive 3'- to 5'-endonucleasic mode. Neo-synthesized pregenomic RNA (pgRNA) are encapsidated together with the P protein, and reverse-transcribed inside the nucleocapsid. Initiation of reverse-transcription occurs first by binding the epsilon loop on the pgRNA genome, and is initiated by protein priming, thereby the 5'-end of (-)DNA is covalently linked to P protein. Partial (+)DNA is synthesized from the (-)DNA template and generates the relaxed circular DNA (RC-DNA) genome. After budding and infection, the RC-DNA migrates in the nucleus, and is converted into a plasmid-like covalently closed circular DNA (cccDNA). The activity of P protein does not seem to be necessary for cccDNA generation, and is presumably released from (+)DNA by host nuclear DNA repair machinery. In Homo sapiens (Human), this protein is Protein P.